Reading from the N-terminus, the 139-residue chain is Plastocyanin (139 aa).

The N-terminal stretch at 1–34 (MKLIAQISRSLSLALFALVLMVGSFVAVMSPAAA) is a signal peptide. One can recognise a Plastocyanin-like domain in the interval 35-139 (ETFTVKMGAD…GMVGKITVEG (105 aa)). Residues H73, C123, H126, and M131 each coordinate Cu cation.

The protein belongs to the plastocyanin family. Cu(2+) is required as a cofactor.

It is found in the cellular thylakoid membrane. Functionally, participates in electron transfer between P700 and the cytochrome b6-f complex in photosystem I. This chain is Plastocyanin (petE), found in Leptolyngbya laminosa (Phormidium laminosum).